A 111-amino-acid polypeptide reads, in one-letter code: Universal stress protein B (111 aa).

Helical transmembrane passes span 1–21 (MIST…NMAR) and 90–110 (FILT…LAIW).

The protein belongs to the universal stress protein B family.

It localises to the cell inner membrane. The sequence is that of Universal stress protein B from Erwinia tasmaniensis (strain DSM 17950 / CFBP 7177 / CIP 109463 / NCPPB 4357 / Et1/99).